We begin with the raw amino-acid sequence, 270 residues long: Fructose-2,6-bisphosphatase TIGAR (270 aa).

The active-site Tele-phosphohistidine intermediate is H11. The residue at position 50 (K50) is an N6-acetyllysine. E89 serves as the catalytic Proton donor/acceptor.

This sequence belongs to the phosphoglycerate mutase family. In terms of assembly, interacts with HK2; the interaction increases hexokinase HK2 activity in a hypoxia- and HIF1A-dependent manner, resulting in the regulation of mitochondrial membrane potential, thus increasing NADPH production and decreasing intracellular ROS levels.

Its subcellular location is the cytoplasm. The protein resides in the nucleus. It localises to the mitochondrion. The enzyme catalyses beta-D-fructose 2,6-bisphosphate + H2O = beta-D-fructose 6-phosphate + phosphate. Functionally, fructose-bisphosphatase hydrolyzing fructose-2,6-bisphosphate as well as fructose-1,6-bisphosphate. Acts as a negative regulator of glycolysis by lowering intracellular levels of fructose-2,6-bisphosphate in a p53/TP53-dependent manner, resulting in the pentose phosphate pathway (PPP) activation and NADPH production. Contributes to the generation of reduced glutathione to cause a decrease in intracellular reactive oxygen species (ROS) content, correlating with its ability to protect cells from oxidative or metabolic stress-induced cell death. Plays a role in promoting protection against cell death during hypoxia by decreasing mitochondria ROS levels in a HK2-dependent manner through a mechanism that is independent of its fructose-bisphosphatase activity. In response to cardiac damage stress, mediates p53-induced inhibition of myocyte mitophagy through ROS levels reduction and the subsequent inactivation of BNIP3. Reduced mitophagy results in an enhanced apoptotic myocyte cell death, and exacerbates cardiac damage. Plays a role in adult intestinal regeneration; contributes to the growth, proliferation and survival of intestinal crypts following tissue ablation. Plays a neuroprotective role against ischemic brain damage by enhancing PPP flux and preserving mitochondria functions. Protects glioma cells from hypoxia- and ROS-induced cell death by inhibiting glycolysis and activating mitochondrial energy metabolism and oxygen consumption in a TKTL1-dependent and p53/TP53-independent manner. Plays a role in cancer cell survival by promoting DNA repair through activating PPP flux in a CDK5-ATM-dependent signaling pathway during hypoxia and/or genome stress-induced DNA damage responses. Involved in intestinal tumor progression. The protein is Fructose-2,6-bisphosphatase TIGAR of Bos taurus (Bovine).